The primary structure comprises 160 residues: Prostaglandin E synthase 3 (160 aa).

Residues 1–90 form the CS domain; sequence MQPASAKWYD…ESGQSWPRLT (90 aa). An N6-acetyllysine modification is found at Lys-33. A Glycyl lysine isopeptide (Lys-Gly) (interchain with G-Cter in SUMO2) cross-link involves residue Lys-35. Ser-44 is modified (phosphoserine). Lys-65 is covalently cross-linked (Glycyl lysine isopeptide (Lys-Gly) (interchain with G-Cter in SUMO2)). Ser-85, Ser-100, Ser-113, Ser-118, Ser-148, and Ser-151 each carry phosphoserine. The segment at 124–160 is disordered; sequence SEMMNNMGGDEDVDLPEVDGADDDSQDSDDEKMPDLE. The span at 132–153 shows a compositional bias: acidic residues; sequence GDEDVDLPEVDGADDDSQDSDD. Positions 157 to 160 match the PXLE motif motif; it reads PDLE.

Belongs to the p23/wos2 family. In terms of assembly, probably forms a complex composed of chaperones HSP90 and HSP70, co-chaperones STIP1/HOP, CDC37, PPP5C, PTGES3/p23, TSC1 and client protein TSC2. Binds to the progesterone receptor. Interacts with TERT; the interaction, together with HSP90AA1, is required for correct assembly and stabilization of the telomerase holoenzyme complex. Interacts (via PXLE motif) with EGLN1/PHD2, recruiting EGLN1/PHD2 to the HSP90 pathway to facilitate HIF alpha proteins hydroxylation. Interacts with HSP90AA1, FLCN, FNIP1 and FNIP2. In terms of processing, proteolytically cleaved by caspase-7 (CASP7) in response to apoptosis, leading to its inactivation. In terms of tissue distribution, detected in testis and ovary, at lower levels in endometrium, myometrium, kidney and lung, and only faintly in spleen, heart and muscle (at protein level). Expressed at high levels in glandular and luminal epithelial cells of the endometrium, but also detected in stromal cells (at protein level).

It is found in the cytoplasm. It carries out the reaction prostaglandin H2 = prostaglandin E2. It participates in lipid metabolism; prostaglandin biosynthesis. Cytosolic prostaglandin synthase that catalyzes the oxidoreduction of prostaglandin endoperoxide H2 (PGH2) to prostaglandin E2 (PGE2). Molecular chaperone that localizes to genomic response elements in a hormone-dependent manner and disrupts receptor-mediated transcriptional activation, by promoting disassembly of transcriptional regulatory complexes. Facilitates HIF alpha proteins hydroxylation via interaction with EGLN1/PHD2, leading to recruit EGLN1/PHD2 to the HSP90 pathway. This is Prostaglandin E synthase 3 (PTGES3) from Bos taurus (Bovine).